The following is a 313-amino-acid chain: Pseudouridine-5'-phosphate glycosidase (313 aa).

Glutamate 26 (proton donor) is an active-site residue. Substrate is bound by residues lysine 87 and alanine 107. Aspartate 139 contacts Mn(2+). Substrate is bound at residue 141–143; the sequence is SAD. The Nucleophile role is filled by lysine 160.

It belongs to the pseudouridine-5'-phosphate glycosidase family. As to quaternary structure, homotrimer. It depends on Mn(2+) as a cofactor.

The enzyme catalyses D-ribose 5-phosphate + uracil = psi-UMP + H2O. Catalyzes the reversible cleavage of pseudouridine 5'-phosphate (PsiMP) to ribose 5-phosphate and uracil. Functions biologically in the cleavage direction, as part of a pseudouridine degradation pathway. In Corynebacterium aurimucosum (strain ATCC 700975 / DSM 44827 / CIP 107346 / CN-1) (Corynebacterium nigricans), this protein is Pseudouridine-5'-phosphate glycosidase.